Reading from the N-terminus, the 351-residue chain is Probable dual-specificity RNA methyltransferase RlmN (351 aa).

Catalysis depends on Glu98, which acts as the Proton acceptor. The 229-residue stretch at 104-332 (TQKRLTVCVS…ASIRRSRGLD (229 aa)) folds into the Radical SAM core domain. Cys111 and Cys337 are joined by a disulfide. [4Fe-4S] cluster-binding residues include Cys118, Cys122, and Cys125. S-adenosyl-L-methionine-binding positions include 165 to 166 (GE), Ser195, 218 to 220 (SLH), and Asn294. Cys337 (S-methylcysteine intermediate) is an active-site residue.

This sequence belongs to the radical SAM superfamily. RlmN family. Requires [4Fe-4S] cluster as cofactor.

It is found in the cytoplasm. The catalysed reaction is adenosine(2503) in 23S rRNA + 2 reduced [2Fe-2S]-[ferredoxin] + 2 S-adenosyl-L-methionine = 2-methyladenosine(2503) in 23S rRNA + 5'-deoxyadenosine + L-methionine + 2 oxidized [2Fe-2S]-[ferredoxin] + S-adenosyl-L-homocysteine. It catalyses the reaction adenosine(37) in tRNA + 2 reduced [2Fe-2S]-[ferredoxin] + 2 S-adenosyl-L-methionine = 2-methyladenosine(37) in tRNA + 5'-deoxyadenosine + L-methionine + 2 oxidized [2Fe-2S]-[ferredoxin] + S-adenosyl-L-homocysteine. Functionally, specifically methylates position 2 of adenine 2503 in 23S rRNA and position 2 of adenine 37 in tRNAs. The polypeptide is Probable dual-specificity RNA methyltransferase RlmN (Acaryochloris marina (strain MBIC 11017)).